A 31-amino-acid polypeptide reads, in one-letter code: Toxin BmKK16 (31 aa).

Residue glutamine 1 is modified to Pyrrolidone carboxylic acid. Intrachain disulfides connect cysteine 4-cysteine 20, cysteine 10-cysteine 25, and cysteine 14-cysteine 27. Residue proline 31 is modified to Proline amide.

Belongs to the short scorpion toxin superfamily. Potassium channel inhibitor family. Alpha-KTx 17 subfamily. The N-terminus is blocked. In terms of tissue distribution, expressed by the venom gland.

It localises to the secreted. In terms of biological role, blocker of potassium channels (Kv). In Olivierus martensii (Manchurian scorpion), this protein is Toxin BmKK16.